Consider the following 41-residue polypeptide: Photosystem I reaction center subunit IX (41 aa).

Residues 7 to 27 (YLSTAPVIALAWMSFTAGLLI) form a helical membrane-spanning segment.

Belongs to the PsaJ family.

It localises to the plastid. The protein localises to the chloroplast thylakoid membrane. May help in the organization of the PsaE and PsaF subunits. The polypeptide is Photosystem I reaction center subunit IX (Tupiella akineta (Green alga)).